Here is a 953-residue protein sequence, read N- to C-terminus: Isoleucine--tRNA ligase (953 aa).

The 'HIGH' region signature appears at 57-67; that stretch reads PYANGDIHIGH. Glutamate 582 lines the L-isoleucyl-5'-AMP pocket. The short motif at 623-627 is the 'KMSKS' region element; that stretch reads KMSKS. ATP is bound at residue lysine 626. Positions 916, 919, 936, and 939 each coordinate Zn(2+).

The protein belongs to the class-I aminoacyl-tRNA synthetase family. IleS type 1 subfamily. In terms of assembly, monomer. Zn(2+) serves as cofactor.

The protein localises to the cytoplasm. The catalysed reaction is tRNA(Ile) + L-isoleucine + ATP = L-isoleucyl-tRNA(Ile) + AMP + diphosphate. Functionally, catalyzes the attachment of isoleucine to tRNA(Ile). As IleRS can inadvertently accommodate and process structurally similar amino acids such as valine, to avoid such errors it has two additional distinct tRNA(Ile)-dependent editing activities. One activity is designated as 'pretransfer' editing and involves the hydrolysis of activated Val-AMP. The other activity is designated 'posttransfer' editing and involves deacylation of mischarged Val-tRNA(Ile). The chain is Isoleucine--tRNA ligase from Bordetella bronchiseptica (strain ATCC BAA-588 / NCTC 13252 / RB50) (Alcaligenes bronchisepticus).